Consider the following 428-residue polypeptide: D-amino acid dehydrogenase (428 aa).

3–17 serves as a coordination point for FAD; that stretch reads VVILGSGVVGVASAY.

Belongs to the DadA oxidoreductase family. FAD is required as a cofactor.

The catalysed reaction is a D-alpha-amino acid + A + H2O = a 2-oxocarboxylate + AH2 + NH4(+). It functions in the pathway amino-acid degradation; D-alanine degradation; NH(3) and pyruvate from D-alanine: step 1/1. Functionally, oxidative deamination of D-amino acids. This chain is D-amino acid dehydrogenase, found in Burkholderia cenocepacia (strain ATCC BAA-245 / DSM 16553 / LMG 16656 / NCTC 13227 / J2315 / CF5610) (Burkholderia cepacia (strain J2315)).